Reading from the N-terminus, the 473-residue chain is Glucose-1-phosphate adenylyltransferase small subunit, chloroplastic/amyloplastic (473 aa).

Residues 1–36 form a disordered region; that stretch reads MDVPLASKTFPSPSPSKREQCNIDGHKSSSKHADLN. A compositionally biased stretch (basic and acidic residues) spans 16-36; it reads SKREQCNIDGHKSSSKHADLN.

This sequence belongs to the bacterial/plant glucose-1-phosphate adenylyltransferase family. In terms of assembly, heterotetramer. Abundantly expressed in the whole grains, a slightly less abundant expression is seen in leaves, while a low level expression is seen in the roots. A greater expression is seen in the endosperm than in the embryo and pericarp layers.

It localises to the plastid. The protein localises to the chloroplast. The protein resides in the amyloplast. The catalysed reaction is alpha-D-glucose 1-phosphate + ATP + H(+) = ADP-alpha-D-glucose + diphosphate. It functions in the pathway glycan biosynthesis; starch biosynthesis. With respect to regulation, insensitive to 3'phosphoglycerate and orthophosphate. Its function is as follows. This protein plays a role in synthesis of starch. It catalyzes the synthesis of the activated glycosyl donor, ADP-glucose from Glc-1-P and ATP. This chain is Glucose-1-phosphate adenylyltransferase small subunit, chloroplastic/amyloplastic (AGP-S), found in Triticum aestivum (Wheat).